The primary structure comprises 147 residues: Acidic phospholipase A2 beta-bungarotoxin A3 chain (147 aa).

The signal sequence occupies residues 1 to 19 (MYPAHLLVLSAVCVSLLGA). The propeptide occupies 20–27 (ANIPPHPL). Cystine bridges form between Cys54/Cys146, Cys56/Cys72, Cys71/Cys127, Cys78/Cys120, Cys88/Cys113, and Cys106/Cys118. Ca(2+) is bound by residues Tyr55, Gly57, and Gly59. Residue His75 is part of the active site. Residue Asp76 participates in Ca(2+) binding. The active site involves Asp121.

It belongs to the phospholipase A2 family. Group I subfamily. D49 sub-subfamily. Heterodimer; disulfide-linked. The A chains have phospholipase A2 activity and the B chains show homology with the basic protease inhibitors. The A3 chain is found in beta-5 bungarotoxins. Requires Ca(2+) as cofactor. In terms of tissue distribution, expressed by the venom gland.

It localises to the secreted. The catalysed reaction is a 1,2-diacyl-sn-glycero-3-phosphocholine + H2O = a 1-acyl-sn-glycero-3-phosphocholine + a fatty acid + H(+). Snake venom phospholipase A2 (PLA2) that inhibits neuromuscular transmission by blocking acetylcholine release from the nerve termini. PLA2 catalyzes the calcium-dependent hydrolysis of the 2-acyl groups in 3-sn-phosphoglycerides. This chain is Acidic phospholipase A2 beta-bungarotoxin A3 chain, found in Bungarus multicinctus (Many-banded krait).